The following is a 199-amino-acid chain: Nucleoside triphosphate pyrophosphatase (199 aa).

Aspartate 76 functions as the Proton acceptor in the catalytic mechanism.

It belongs to the Maf family. Requires a divalent metal cation as cofactor.

Its subcellular location is the cytoplasm. It catalyses the reaction a ribonucleoside 5'-triphosphate + H2O = a ribonucleoside 5'-phosphate + diphosphate + H(+). The enzyme catalyses a 2'-deoxyribonucleoside 5'-triphosphate + H2O = a 2'-deoxyribonucleoside 5'-phosphate + diphosphate + H(+). Nucleoside triphosphate pyrophosphatase. May have a dual role in cell division arrest and in preventing the incorporation of modified nucleotides into cellular nucleic acids. The chain is Nucleoside triphosphate pyrophosphatase from Roseobacter denitrificans (strain ATCC 33942 / OCh 114) (Erythrobacter sp. (strain OCh 114)).